The sequence spans 381 residues: Succinyl-diaminopimelate desuccinylase (381 aa).

His70 contacts Zn(2+). Asp72 is a catalytic residue. Residue Asp103 participates in Zn(2+) binding. Glu136 acts as the Proton acceptor in catalysis. Positions 137, 165, and 354 each coordinate Zn(2+).

It belongs to the peptidase M20A family. DapE subfamily. Homodimer. Zn(2+) is required as a cofactor. Requires Co(2+) as cofactor.

The enzyme catalyses N-succinyl-(2S,6S)-2,6-diaminopimelate + H2O = (2S,6S)-2,6-diaminopimelate + succinate. Its pathway is amino-acid biosynthesis; L-lysine biosynthesis via DAP pathway; LL-2,6-diaminopimelate from (S)-tetrahydrodipicolinate (succinylase route): step 3/3. Catalyzes the hydrolysis of N-succinyl-L,L-diaminopimelic acid (SDAP), forming succinate and LL-2,6-diaminopimelate (DAP), an intermediate involved in the bacterial biosynthesis of lysine and meso-diaminopimelic acid, an essential component of bacterial cell walls. The polypeptide is Succinyl-diaminopimelate desuccinylase (Roseobacter denitrificans (strain ATCC 33942 / OCh 114) (Erythrobacter sp. (strain OCh 114))).